A 348-amino-acid polypeptide reads, in one-letter code: MLNLLQGCKDFLHLTLSNPEHLDPIAPQPLYGHTLVSLWDTGVLVFEPVDGNSHKDIVLSSGVHGNETAPIELCNGLIQDVLEGRLQVKERVLFLIGNPAAINNGTRIVDENMNRLFSGEHSRGPGLSNPERVRAKKLETYVTRFFEKGAEKGEGRQRIHYDLHTAIRGSKHEKFAIYPYRPGRAFSGEQIMFLAASGVDTVLFHHEPTTTFSYFSSELFRADAFTIELGKVYPMGQNDMSKFANTREMFKRLICAEPLELAPFDETQVNLYQVCRVINKEVDDFEFTFSTDVENFSAFPRGHVIARQGGKDILVEQEAEAVVFPNAKVPVGQRTVIMLVPAVNPHVE.

His64, Glu67, and His164 together coordinate Zn(2+). Glu228 is an active-site residue.

This sequence belongs to the AspA/AstE family. Succinylglutamate desuccinylase subfamily. It depends on Zn(2+) as a cofactor.

The enzyme catalyses N-succinyl-L-glutamate + H2O = L-glutamate + succinate. It participates in amino-acid degradation; L-arginine degradation via AST pathway; L-glutamate and succinate from L-arginine: step 5/5. In terms of biological role, transforms N(2)-succinylglutamate into succinate and glutamate. The chain is Succinylglutamate desuccinylase from Shewanella amazonensis (strain ATCC BAA-1098 / SB2B).